The following is a 190-amino-acid chain: uncharacterized protein (190 aa).

It to Synechocystis PCC 6803 sll1609 and slr1290.

This is an uncharacterized protein from Synechocystis sp. (strain ATCC 27184 / PCC 6803 / Kazusa).